The sequence spans 399 residues: Stage III sporulation protein AE (399 aa).

The first 24 residues, 1–24 (MKRFQWVLLLAVLIIAGRAEIVQA), serve as a signal peptide directing secretion. The next 7 membrane-spanning stretches (helical) occupy residues 104-124 (VLAN…CVIL), 140-160 (AYSI…HVAI), 172-192 (SFIL…GGAV), 209-229 (GLLI…LSIV), 248-268 (IAIG…SVQG), 315-335 (VGIL…IKVL), and 368-388 (IYIF…LTVI).

As to quaternary structure, interacts with SpoIIIJ and YqjG.

It localises to the cell membrane. Required during sporulation for activation of sigma factor SpoIIIG/SigG after engulfment is completed in the prespore. Overexpression in the absence of SpoIIIJ is synthetically lethal. The chain is Stage III sporulation protein AE (spoIIIAE) from Bacillus subtilis (strain 168).